A 318-amino-acid polypeptide reads, in one-letter code: Glutathione synthetase (318 aa).

Residues 129–314 (KLAITEFPDL…VPEMFAVALE (186 aa)) form the ATP-grasp domain. Residue 155–211 (HAAQGDVIVKPLDGMGGTGIFRLQRSEPNLNAILETLTDNGTRTIMAQRYIPEIVKG) participates in ATP binding. Residues Glu-285 and Asn-287 each coordinate Mg(2+).

Belongs to the prokaryotic GSH synthase family. The cofactor is Mg(2+). It depends on Mn(2+) as a cofactor.

The catalysed reaction is gamma-L-glutamyl-L-cysteine + glycine + ATP = glutathione + ADP + phosphate + H(+). It participates in sulfur metabolism; glutathione biosynthesis; glutathione from L-cysteine and L-glutamate: step 2/2. The sequence is that of Glutathione synthetase from Bordetella bronchiseptica (strain ATCC BAA-588 / NCTC 13252 / RB50) (Alcaligenes bronchisepticus).